We begin with the raw amino-acid sequence, 95 residues long: Large ribosomal subunit protein bL25 (95 aa).

This sequence belongs to the bacterial ribosomal protein bL25 family. In terms of assembly, part of the 50S ribosomal subunit; part of the 5S rRNA/L5/L18/L25 subcomplex. Contacts the 5S rRNA. Binds to the 5S rRNA independently of L5 and L18.

This is one of the proteins that binds to the 5S RNA in the ribosome where it forms part of the central protuberance. This Actinobacillus pleuropneumoniae serotype 5b (strain L20) protein is Large ribosomal subunit protein bL25.